The primary structure comprises 576 residues: MIVFGWAVFLASRSLGQGLLLTLEEHIAHFLGTGGATTTMGNSCICRDDSGTDDSVDTQQQQAENSAVPTADTRSQPRDPVRPPRRGRGPHEPRRKKQNVDGLVLDTLAVIRTLVDNDQEPPYSMITLHEMAETDEGWLDVVQSLIRVIPLEDPLGPAVITLLLDECPLPTKDALQKLTEILNLNGEVACQDSSHPAKHRNTSAVLGCLAEKLAGPASIGLLSPGILEYLLQCLKLQSHPTVMLFALIALEKFAQTSENKLTISESSISDRLVTLESWANDPDYLKRQVGFCAQWSLDNLFLKEGRQLTYEKVNLSSIRAMLNSNDVSEYLKISPHGLEARCDASSFESVRCTFCVDAGVWYYEVTVVTSGVMQIGWATRDSKFLNHEGYGIGDDEYSCAYDGCRQLIWYNARSKPHIHPCWKEGDTVGFLLDLNEKQMIFFLNGNQLPPEKQVFSSTVSGFFAAASFMSYQQCEFNFGAKPFKYPPSMKFSTFNDYAFLTAEEKIILPRHRRLALLKQVSIRENCCSLCCDEVADTQLKPCGHSDLCMDCALQLETCPLCRKEIVSRIRQISHIS.

The signal sequence occupies residues 1-16 (MIVFGWAVFLASRSLG). Ser-50 is modified (phosphoserine). Positions 50–99 (SGTDDSVDTQQQQAENSAVPTADTRSQPRDPVRPPRRGRGPHEPRRKKQN) are disordered. The segment covering 57 to 68 (DTQQQQAENSAV) has biased composition (polar residues). Positions 83 to 97 (PPRRGRGPHEPRRKK) are enriched in basic residues. The B30.2/SPRY domain occupies 300–483 (LFLKEGRQLT…CEFNFGAKPF (184 aa)). An N-linked (GlcNAc...) asparagine glycan is attached at Asn-314. Residues 527–562 (CSLCCDEVADTQLKPCGHSDLCMDCALQLETCPLCR) form an RING-type zinc finger.

The protein resides in the secreted. This is RING finger and SPRY domain-containing protein 1 (RSPRY1) from Pongo abelii (Sumatran orangutan).